The sequence spans 216 residues: Octanoyltransferase (216 aa).

The 184-residue stretch at 33–216 (AATADELWIV…ANRLSTSLSR (184 aa)) folds into the BPL/LPL catalytic domain. Substrate is bound by residues 72-79 (RGGEVTYH), 148-150 (ALG), and 162-164 (GVS). The active-site Acyl-thioester intermediate is the Cys180.

Belongs to the LipB family.

The protein localises to the cytoplasm. The catalysed reaction is octanoyl-[ACP] + L-lysyl-[protein] = N(6)-octanoyl-L-lysyl-[protein] + holo-[ACP] + H(+). Its pathway is protein modification; protein lipoylation via endogenous pathway; protein N(6)-(lipoyl)lysine from octanoyl-[acyl-carrier-protein]: step 1/2. Functionally, catalyzes the transfer of endogenously produced octanoic acid from octanoyl-acyl-carrier-protein onto the lipoyl domains of lipoate-dependent enzymes. Lipoyl-ACP can also act as a substrate although octanoyl-ACP is likely to be the physiological substrate. The chain is Octanoyltransferase from Janthinobacterium sp. (strain Marseille) (Minibacterium massiliensis).